Here is a 92-residue protein sequence, read N- to C-terminus: Small ribosomal subunit protein uS19c (92 aa).

The protein belongs to the universal ribosomal protein uS19 family.

The protein resides in the plastid. The protein localises to the chloroplast. Its function is as follows. Protein S19 forms a complex with S13 that binds strongly to the 16S ribosomal RNA. This chain is Small ribosomal subunit protein uS19c, found in Calycanthus floridus var. glaucus (Eastern sweetshrub).